A 258-amino-acid polypeptide reads, in one-letter code: Indole-3-glycerol phosphate synthase (258 aa).

Belongs to the TrpC family.

The catalysed reaction is 1-(2-carboxyphenylamino)-1-deoxy-D-ribulose 5-phosphate + H(+) = (1S,2R)-1-C-(indol-3-yl)glycerol 3-phosphate + CO2 + H2O. It functions in the pathway amino-acid biosynthesis; L-tryptophan biosynthesis; L-tryptophan from chorismate: step 4/5. This chain is Indole-3-glycerol phosphate synthase, found in Endomicrobium trichonymphae.